We begin with the raw amino-acid sequence, 944 residues long: Protein translocase subunit SecA (944 aa).

ATP contacts are provided by residues Q87, 105-109 (GEGKT), and D494. Residues 894–944 (HAAAAGDGEEKPRPKQETVVRTQPKVGRNDPCPCGSGKKYKKCHGATEAAV) form a disordered region. A compositionally biased stretch (basic and acidic residues) spans 901 to 911 (GEEKPRPKQET). Residues C925, C927, C936, and H937 each coordinate Zn(2+).

Belongs to the SecA family. Monomer and homodimer. Part of the essential Sec protein translocation apparatus which comprises SecA, SecYEG and auxiliary proteins SecDF-YajC and YidC. Zn(2+) serves as cofactor.

The protein localises to the cell inner membrane. Its subcellular location is the cytoplasm. The enzyme catalyses ATP + H2O + cellular proteinSide 1 = ADP + phosphate + cellular proteinSide 2.. Its function is as follows. Part of the Sec protein translocase complex. Interacts with the SecYEG preprotein conducting channel. Has a central role in coupling the hydrolysis of ATP to the transfer of proteins into and across the cell membrane, serving as an ATP-driven molecular motor driving the stepwise translocation of polypeptide chains across the membrane. In Anaeromyxobacter sp. (strain Fw109-5), this protein is Protein translocase subunit SecA.